We begin with the raw amino-acid sequence, 612 residues long: Sulfite reductase [NADPH] hemoprotein beta-component (612 aa).

The segment at 1–26 is disordered; the sequence is MDDHKPIETPDGPAVDTPGIGARRYE. [4Fe-4S] cluster contacts are provided by cysteine 469, cysteine 475, cysteine 514, and cysteine 518. Cysteine 518 is a binding site for siroheme.

It belongs to the nitrite and sulfite reductase 4Fe-4S domain family. Alpha(8)-beta(8). The alpha component is a flavoprotein, the beta component is a hemoprotein. It depends on siroheme as a cofactor. Requires [4Fe-4S] cluster as cofactor.

It catalyses the reaction hydrogen sulfide + 3 NADP(+) + 3 H2O = sulfite + 3 NADPH + 4 H(+). Its pathway is sulfur metabolism; hydrogen sulfide biosynthesis; hydrogen sulfide from sulfite (NADPH route): step 1/1. Component of the sulfite reductase complex that catalyzes the 6-electron reduction of sulfite to sulfide. This is one of several activities required for the biosynthesis of L-cysteine from sulfate. The chain is Sulfite reductase [NADPH] hemoprotein beta-component from Methylorubrum extorquens (strain CM4 / NCIMB 13688) (Methylobacterium extorquens).